Reading from the N-terminus, the 383-residue chain is Paralemmin-1 (383 aa).

N-acetylmethionine is present on Met1. The stretch at Asp7–Gly101 forms a coiled coil. Disordered stretches follow at residues Arg51–Met164, Thr242–Gln293, and Ser333–Lys374. Residues Asp69–Asp96 show a composition bias toward basic and acidic residues. 3 positions are modified to phosphoserine: Ser116, Ser122, and Ser124. Residues Glu133–Leu143 are compositionally biased toward polar residues. Residues Thr141, Thr145, and Thr153 each carry the phosphothreonine modification. Residues Ser157 and Ser161 each carry the phosphoserine modification. The residue at position 242 (Thr242) is a Phosphothreonine. Ser244 is modified (phosphoserine). Over residues Gly257–Thr273 the composition is skewed to basic and acidic residues. At Ser345 the chain carries Phosphoserine. Residues Gln357–Thr367 show a composition bias toward polar residues. A phosphothreonine mark is found at Thr361, Thr362, and Thr363. Residue Ser365 is modified to Phosphoserine. A Phosphothreonine modification is found at Thr367. S-palmitoyl cysteine attachment occurs at residues Cys377 and Cys379. Cys380 carries the cysteine methyl ester modification. Residue Cys380 is the site of S-farnesyl cysteine attachment. The propeptide at Ser381–Met383 is removed in mature form.

The protein belongs to the paralemmin family. Interacts with dopamine receptor DRD3. Expressed in neurons cells of neuropil-rich areas of the brain, in the Purkinje cells of the cerebellum, in cells of the cerebral cortex, hippocampus, brainstem nuclei and glial processes and sheaths. Expressed in the medulla of the adrenal chromaffin cells and renal duct cells (at protein level).

Its subcellular location is the cell membrane. It localises to the cell projection. It is found in the filopodium membrane. The protein localises to the axon. The protein resides in the dendrite. Its subcellular location is the dendritic spine. It localises to the basolateral cell membrane. It is found in the apicolateral cell membrane. Involved in plasma membrane dynamics and cell process formation. Necessary for axonal and dendritic filopodia induction, for dendritic spine maturation and synapse formation in a palmitoylation-dependent manner. The sequence is that of Paralemmin-1 (Palm) from Rattus norvegicus (Rat).